The sequence spans 243 residues: Small ribosomal subunit protein uS2 (243 aa).

It belongs to the universal ribosomal protein uS2 family.

This chain is Small ribosomal subunit protein uS2, found in Aliivibrio salmonicida (strain LFI1238) (Vibrio salmonicida (strain LFI1238)).